Consider the following 261-residue polypeptide: uncharacterized protein (261 aa).

The protein resides in the plastid. Its subcellular location is the chloroplast. This is an uncharacterized protein from Mesostigma viride (Green alga).